We begin with the raw amino-acid sequence, 169 residues long: Ribosome maturation factor RimM (169 aa).

In terms of domain architecture, PRC barrel spans 97–169 (EDEVYFKDLI…KIVVDWEYDY (73 aa)).

It belongs to the RimM family. In terms of assembly, binds ribosomal protein uS19.

It localises to the cytoplasm. In terms of biological role, an accessory protein needed during the final step in the assembly of 30S ribosomal subunit, possibly for assembly of the head region. Essential for efficient processing of 16S rRNA. May be needed both before and after RbfA during the maturation of 16S rRNA. It has affinity for free ribosomal 30S subunits but not for 70S ribosomes. The sequence is that of Ribosome maturation factor RimM from Francisella tularensis subsp. tularensis (strain FSC 198).